The primary structure comprises 170 residues: Inosine/xanthosine triphosphatase (170 aa).

Belongs to the YjjX NTPase family. In terms of assembly, homodimer. Mg(2+) is required as a cofactor. Requires Mn(2+) as cofactor.

It carries out the reaction XTP + H2O = XDP + phosphate + H(+). It catalyses the reaction ITP + H2O = IDP + phosphate + H(+). Phosphatase that hydrolyzes non-canonical purine nucleotides such as XTP and ITP to their respective diphosphate derivatives. Probably excludes non-canonical purines from DNA/RNA precursor pool, thus preventing their incorporation into DNA/RNA and avoiding chromosomal lesions. This is Inosine/xanthosine triphosphatase from Aliivibrio fischeri (strain ATCC 700601 / ES114) (Vibrio fischeri).